The following is a 312-amino-acid chain: tRNA uridine(34) hydroxylase (312 aa).

Residues 147-237 (SDRNVIFIDM…GILGYVHDAN (91 aa)) enclose the Rhodanese domain. Residue C201 is the Cysteine persulfide intermediate of the active site.

It belongs to the TrhO family.

It catalyses the reaction uridine(34) in tRNA + AH2 + O2 = 5-hydroxyuridine(34) in tRNA + A + H2O. Functionally, catalyzes oxygen-dependent 5-hydroxyuridine (ho5U) modification at position 34 in tRNAs. This is tRNA uridine(34) hydroxylase from Buchnera aphidicola subsp. Schizaphis graminum (strain Sg).